Consider the following 454-residue polypeptide: Bifunctional protein GlmU (454 aa).

Residues 1-226 (MSLDIVILAA…AMEVQGANDR (226 aa)) are pyrophosphorylase. UDP-N-acetyl-alpha-D-glucosamine contacts are provided by residues 8 to 11 (LAAG), K22, Q73, 78 to 79 (GT), 99 to 101 (YGD), G136, E151, N166, and N224. Mg(2+) is bound at residue D101. Residue N224 coordinates Mg(2+). The segment at 227-247 (LQLAQLERHYQSRVARRLMAQ) is linker. The interval 248 to 454 (GVTLRDPARF…GWQRPTKQKK (207 aa)) is N-acetyltransferase. UDP-N-acetyl-alpha-D-glucosamine is bound by residues R330 and K348. The active-site Proton acceptor is H360. Residues Y363 and N374 each coordinate UDP-N-acetyl-alpha-D-glucosamine. Acetyl-CoA contacts are provided by residues A377, 383 to 384 (NY), S402, A420, and R437.

It in the N-terminal section; belongs to the N-acetylglucosamine-1-phosphate uridyltransferase family. In the C-terminal section; belongs to the transferase hexapeptide repeat family. As to quaternary structure, homotrimer. It depends on Mg(2+) as a cofactor.

The protein resides in the cytoplasm. The enzyme catalyses alpha-D-glucosamine 1-phosphate + acetyl-CoA = N-acetyl-alpha-D-glucosamine 1-phosphate + CoA + H(+). It catalyses the reaction N-acetyl-alpha-D-glucosamine 1-phosphate + UTP + H(+) = UDP-N-acetyl-alpha-D-glucosamine + diphosphate. It functions in the pathway nucleotide-sugar biosynthesis; UDP-N-acetyl-alpha-D-glucosamine biosynthesis; N-acetyl-alpha-D-glucosamine 1-phosphate from alpha-D-glucosamine 6-phosphate (route II): step 2/2. It participates in nucleotide-sugar biosynthesis; UDP-N-acetyl-alpha-D-glucosamine biosynthesis; UDP-N-acetyl-alpha-D-glucosamine from N-acetyl-alpha-D-glucosamine 1-phosphate: step 1/1. Its pathway is bacterial outer membrane biogenesis; LPS lipid A biosynthesis. Catalyzes the last two sequential reactions in the de novo biosynthetic pathway for UDP-N-acetylglucosamine (UDP-GlcNAc). The C-terminal domain catalyzes the transfer of acetyl group from acetyl coenzyme A to glucosamine-1-phosphate (GlcN-1-P) to produce N-acetylglucosamine-1-phosphate (GlcNAc-1-P), which is converted into UDP-GlcNAc by the transfer of uridine 5-monophosphate (from uridine 5-triphosphate), a reaction catalyzed by the N-terminal domain. In Azotobacter vinelandii (strain DJ / ATCC BAA-1303), this protein is Bifunctional protein GlmU.